A 301-amino-acid polypeptide reads, in one-letter code: N-acetylmuramic acid 6-phosphate etherase (301 aa).

An SIS domain is found at 57–220 (VVERLRAGGR…STISMVRLGK (164 aa)). The Proton donor role is filled by E85. E116 is an active-site residue.

This sequence belongs to the GCKR-like family. MurNAc-6-P etherase subfamily. In terms of assembly, homodimer.

The enzyme catalyses N-acetyl-D-muramate 6-phosphate + H2O = N-acetyl-D-glucosamine 6-phosphate + (R)-lactate. The protein operates within amino-sugar metabolism; N-acetylmuramate degradation. Specifically catalyzes the cleavage of the D-lactyl ether substituent of MurNAc 6-phosphate, producing GlcNAc 6-phosphate and D-lactate. The sequence is that of N-acetylmuramic acid 6-phosphate etherase from Rubrobacter xylanophilus (strain DSM 9941 / JCM 11954 / NBRC 16129 / PRD-1).